We begin with the raw amino-acid sequence, 129 residues long: uncharacterized protein (129 aa).

The chain crosses the membrane as a helical span at residues 46–66; the sequence is FFHFFFSFLLHLISPAVTGGI.

It is found in the membrane. This is an uncharacterized protein from Saccharomyces cerevisiae (strain ATCC 204508 / S288c) (Baker's yeast).